A 381-amino-acid chain; its full sequence is Creatine kinase B-type (381 aa).

Serine 4 is modified (phosphoserine). Residues 11 to 98 (KLRFPAEDEF…FDPIIEDRHG (88 aa)) enclose the Phosphagen kinase N-terminal domain. A Phosphothreonine modification is found at threonine 35. Residue lysine 45 forms a Glycyl lysine isopeptide (Lys-Gly) (interchain with G-Cter in ubiquitin) linkage. Valine 72 contributes to the creatine binding site. The segment covering 96–110 (RHGGYKPSDEHKTDL) has biased composition (basic and acidic residues). Residues 96 to 123 (RHGGYKPSDEHKTDLNPDNLQGGDDLDP) are disordered. Residues lysine 101 and lysine 107 each participate in a glycyl lysine isopeptide (Lys-Gly) (interchain with G-Cter in ubiquitin) cross-link. A Phosphotyrosine modification is found at tyrosine 125. In terms of domain architecture, Phosphagen kinase C-terminal spans 125–367 (YVLSSRVRTG…KLLIEMEQRL (243 aa)). ATP is bound by residues 128–132 (SSRVR), arginine 130, arginine 132, and histidine 191. Positions 130–138 (RVRTGRSIR) are internal MTS-like signal. Phosphoserine is present on serine 199. Glutamate 232 provides a ligand contact to creatine. An ATP-binding site is contributed by arginine 236. A 3'-nitrotyrosine modification is found at tyrosine 269. Serine 285 is a binding site for creatine. ATP-binding positions include arginine 292, arginine 320, 320-325 (RGTGGV), and aspartate 335. Threonine 322 carries the phosphothreonine modification. Lysine 381 is covalently cross-linked (Glycyl lysine isopeptide (Lys-Gly) (interchain with G-Cter in ubiquitin)).

This sequence belongs to the ATP:guanido phosphotransferase family. As to quaternary structure, dimer of identical or non-identical chains, which can be either B (brain type) or M (muscle type). With MM being the major form in skeletal muscle and myocardium, MB existing in myocardium, and BB existing in many tissues, especially brain. Interacts with SLC12A6 (via C-terminus); the interaction may be required for SLC12A6 potassium-chloride cotransport activity. Ubiquitinated by the ECS(ASB9) complex, leading to its degradation by the proteasome.

It localises to the cytoplasm. Its subcellular location is the cytosol. The protein localises to the mitochondrion. It is found in the cell membrane. It catalyses the reaction creatine + ATP = N-phosphocreatine + ADP + H(+). In terms of biological role, reversibly catalyzes the transfer of phosphate between ATP and various phosphogens (e.g. creatine phosphate). Creatine kinase isoenzymes play a central role in energy transduction in tissues with large, fluctuating energy demands, such as skeletal muscle, heart, brain and spermatozoa. Acts as a key regulator of adaptive thermogenesis as part of the futile creatine cycle: localizes to the mitochondria of thermogenic fat cells and acts by mediating phosphorylation of creatine to initiate a futile cycle of creatine phosphorylation and dephosphorylation. During the futile creatine cycle, creatine and N-phosphocreatine are in a futile cycle, which dissipates the high energy charge of N-phosphocreatine as heat without performing any mechanical or chemical work. This Canis lupus familiaris (Dog) protein is Creatine kinase B-type (CKB).